The primary structure comprises 264 residues: ATP synthase subunit a (264 aa).

The next 6 membrane-spanning stretches (helical) occupy residues 29–49, 90–110, 134–154, 177–197, 208–228, and 235–255; these read TWHI…LWLF, IAPL…MDMI, DLNI…YYSI, IPVN…SLAL, LIFI…ALGV, and LIFH…LTIV.

This sequence belongs to the ATPase A chain family. As to quaternary structure, F-type ATPases have 2 components, CF(1) - the catalytic core - and CF(0) - the membrane proton channel. CF(1) has five subunits: alpha(3), beta(3), gamma(1), delta(1), epsilon(1). CF(0) has three main subunits: a(1), b(2) and c(9-12). The alpha and beta chains form an alternating ring which encloses part of the gamma chain. CF(1) is attached to CF(0) by a central stalk formed by the gamma and epsilon chains, while a peripheral stalk is formed by the delta and b chains.

Its subcellular location is the cell inner membrane. Functionally, key component of the proton channel; it plays a direct role in the translocation of protons across the membrane. In Shewanella loihica (strain ATCC BAA-1088 / PV-4), this protein is ATP synthase subunit a.